A 229-amino-acid chain; its full sequence is Adapter protein MecA (229 aa).

This sequence belongs to the MecA family. In terms of assembly, homodimer.

Functionally, enables the recognition and targeting of unfolded and aggregated proteins to the ClpC protease or to other proteins involved in proteolysis. This is Adapter protein MecA from Latilactobacillus sakei subsp. sakei (strain 23K) (Lactobacillus sakei subsp. sakei).